Here is a 226-residue protein sequence, read N- to C-terminus: PKHD-type hydroxylase mma_3618 (226 aa).

The region spanning 78 to 178 is the Fe2OG dioxygenase domain; sequence RYMPPLFNRY…RISSFFWVQS (101 aa). The Fe cation site is built by H96, D98, and H159. R169 lines the 2-oxoglutarate pocket.

The cofactor is Fe(2+). It depends on L-ascorbate as a cofactor.

The chain is PKHD-type hydroxylase mma_3618 from Janthinobacterium sp. (strain Marseille) (Minibacterium massiliensis).